Reading from the N-terminus, the 109-residue chain is Nucleoid-associated protein Ping_2276 (109 aa).

Belongs to the YbaB/EbfC family. As to quaternary structure, homodimer.

The protein localises to the cytoplasm. It localises to the nucleoid. Its function is as follows. Binds to DNA and alters its conformation. May be involved in regulation of gene expression, nucleoid organization and DNA protection. The protein is Nucleoid-associated protein Ping_2276 of Psychromonas ingrahamii (strain DSM 17664 / CCUG 51855 / 37).